Consider the following 463-residue polypeptide: Senescence/dehydration-associated protein At3g51250 (463 aa).

The span at 1-12 (MNPSHGGDDKQR) shows a compositional bias: basic and acidic residues. Disordered stretches follow at residues 1–31 (MNPSHGGDDKQRPAMYPQVDQSIPDNPFAST), 52–74 (PNLFPDHGDASNDQSPSAPPQAT), and 146–172 (IHPPKEKGQGSGSDSDDEQGQKSKSKS). Positions 19-31 (VDQSIPDNPFAST) are enriched in polar residues. Residues 269–437 (IASGSGKLIR…AWVAFKIRKA (169 aa)) form the Senescence domain.

The chain is Senescence/dehydration-associated protein At3g51250 from Arabidopsis thaliana (Mouse-ear cress).